A 443-amino-acid polypeptide reads, in one-letter code: D-serine dehydratase (443 aa).

Position 118 is an N6-(pyridoxal phosphate)lysine (lysine 118).

This sequence belongs to the serine/threonine dehydratase family. DsdA subfamily. In terms of assembly, monomer. Pyridoxal 5'-phosphate serves as cofactor.

It catalyses the reaction D-serine = pyruvate + NH4(+). The protein is D-serine dehydratase of Yersinia enterocolitica serotype O:8 / biotype 1B (strain NCTC 13174 / 8081).